The primary structure comprises 426 residues: Histidine--tRNA ligase (426 aa).

The protein belongs to the class-II aminoacyl-tRNA synthetase family.

The protein resides in the cytoplasm. It catalyses the reaction tRNA(His) + L-histidine + ATP = L-histidyl-tRNA(His) + AMP + diphosphate + H(+). The sequence is that of Histidine--tRNA ligase from Saccharolobus islandicus (strain Y.G.57.14 / Yellowstone #1) (Sulfolobus islandicus).